The following is a 487-amino-acid chain: 3-octaprenyl-4-hydroxybenzoate carboxy-lyase (487 aa).

Asn-172 contributes to the Mn(2+) binding site. Residues 175–177 (IYR), 189–191 (RWL), and 194–195 (RG) contribute to the prenylated FMN site. Glu-238 lines the Mn(2+) pocket. Asp-287 acts as the Proton donor in catalysis.

It belongs to the UbiD family. In terms of assembly, homohexamer. It depends on prenylated FMN as a cofactor. Mn(2+) is required as a cofactor.

It localises to the cell membrane. The enzyme catalyses a 4-hydroxy-3-(all-trans-polyprenyl)benzoate + H(+) = a 2-(all-trans-polyprenyl)phenol + CO2. Its pathway is cofactor biosynthesis; ubiquinone biosynthesis. In terms of biological role, catalyzes the decarboxylation of 3-octaprenyl-4-hydroxy benzoate to 2-octaprenylphenol, an intermediate step in ubiquinone biosynthesis. This is 3-octaprenyl-4-hydroxybenzoate carboxy-lyase from Actinobacillus pleuropneumoniae serotype 7 (strain AP76).